The primary structure comprises 421 residues: tRNA (guanine(37)-N(1))-methyltransferase (421 aa).

S-adenosyl-L-methionine is bound by residues R198, 242–243, 270–271, and N293; these read DL and DA.

This sequence belongs to the class I-like SAM-binding methyltransferase superfamily. TRM5/TYW2 family. Monomer.

It localises to the mitochondrion matrix. It is found in the nucleus. The protein localises to the cytoplasm. The enzyme catalyses guanosine(37) in tRNA + S-adenosyl-L-methionine = N(1)-methylguanosine(37) in tRNA + S-adenosyl-L-homocysteine + H(+). Functionally, specifically methylates the N1 position of guanosine-37 in various cytoplasmic and mitochondrial tRNAs. Methylation is not dependent on the nature of the nucleoside 5' of the target nucleoside. This is the first step in the biosynthesis of wybutosine (yW), a modified base adjacent to the anticodon of tRNAs and required for accurate decoding. This Paramecium tetraurelia protein is tRNA (guanine(37)-N(1))-methyltransferase.